The chain runs to 162 residues: Class I hydrophobin 3 (162 aa).

Cystine bridges form between Cys-36–Cys-150 and Cys-151–Cys-159.

This sequence belongs to the fungal hydrophobin family. In terms of assembly, self-assembles to form functional amyloid fibrils called rodlets. Self-assembly into fibrillar rodlets occurs spontaneously at hydrophobic:hydrophilic interfaces and the rodlets further associate laterally to form amphipathic monolayers.

It localises to the secreted. The protein localises to the cell wall. Aerial growth, conidiation, and dispersal of filamentous fungi in the environment rely upon a capability of their secreting small amphipathic proteins called hydrophobins (HPBs) with low sequence identity. Class I can self-assemble into an outermost layer of rodlet bundles on aerial cell surfaces, conferring cellular hydrophobicity that supports fungal growth, development and dispersal; whereas Class II form highly ordered films at water-air interfaces through intermolecular interactions but contribute nothing to the rodlet structure. The sequence is that of Class I hydrophobin 3 from Coprinopsis cinerea (strain Okayama-7 / 130 / ATCC MYA-4618 / FGSC 9003) (Inky cap fungus).